The chain runs to 66 residues: MKAKEIRELTTAEIEQKIKALKEELFNLRFQLATGQLENTARIRQVRKDIARMKTIIRERELAANK.

This sequence belongs to the universal ribosomal protein uL29 family.

The protein is Large ribosomal subunit protein uL29 of Geobacillus kaustophilus (strain HTA426).